The chain runs to 497 residues: 3-octaprenyl-4-hydroxybenzoate carboxy-lyase (497 aa).

Asn-175 contacts Mn(2+). Prenylated FMN contacts are provided by residues 178–180, 192–194, and 197–198; these read IYR, RWL, and RG. Residue Glu-241 participates in Mn(2+) binding. Asp-290 functions as the Proton donor in the catalytic mechanism.

This sequence belongs to the UbiD family. In terms of assembly, homohexamer. Prenylated FMN serves as cofactor. Requires Mn(2+) as cofactor.

The protein localises to the cell membrane. It carries out the reaction a 4-hydroxy-3-(all-trans-polyprenyl)benzoate + H(+) = a 2-(all-trans-polyprenyl)phenol + CO2. It functions in the pathway cofactor biosynthesis; ubiquinone biosynthesis. Catalyzes the decarboxylation of 3-octaprenyl-4-hydroxy benzoate to 2-octaprenylphenol, an intermediate step in ubiquinone biosynthesis. In Shigella sonnei (strain Ss046), this protein is 3-octaprenyl-4-hydroxybenzoate carboxy-lyase.